Here is a 92-residue protein sequence, read N- to C-terminus: Large ribosomal subunit protein eL43 (92 aa).

The Zn(2+) site is built by cysteine 39, cysteine 42, cysteine 57, and cysteine 60. The segment at cysteine 39–cysteine 60 adopts a C4-type zinc-finger fold.

It belongs to the eukaryotic ribosomal protein eL43 family. In terms of assembly, component of the large ribosomal subunit.

It is found in the cytoplasm. In terms of biological role, component of the large ribosomal subunit. The ribosome is a large ribonucleoprotein complex responsible for the synthesis of proteins in the cell. The protein is Large ribosomal subunit protein eL43 (RPL37A) of Gallus gallus (Chicken).